Here is a 176-residue protein sequence, read N- to C-terminus: ATP synthase subunit delta (176 aa).

It belongs to the ATPase delta chain family. In terms of assembly, F-type ATPases have 2 components, F(1) - the catalytic core - and F(0) - the membrane proton channel. F(1) has five subunits: alpha(3), beta(3), gamma(1), delta(1), epsilon(1). F(0) has three main subunits: a(1), b(2) and c(10-14). The alpha and beta chains form an alternating ring which encloses part of the gamma chain. F(1) is attached to F(0) by a central stalk formed by the gamma and epsilon chains, while a peripheral stalk is formed by the delta and b chains.

It localises to the cell membrane. Its function is as follows. F(1)F(0) ATP synthase produces ATP from ADP in the presence of a proton or sodium gradient. F-type ATPases consist of two structural domains, F(1) containing the extramembraneous catalytic core and F(0) containing the membrane proton channel, linked together by a central stalk and a peripheral stalk. During catalysis, ATP synthesis in the catalytic domain of F(1) is coupled via a rotary mechanism of the central stalk subunits to proton translocation. This protein is part of the stalk that links CF(0) to CF(1). It either transmits conformational changes from CF(0) to CF(1) or is implicated in proton conduction. This is ATP synthase subunit delta from Wigglesworthia glossinidia brevipalpis.